The primary structure comprises 373 residues: Chemerin-like receptor 1 (373 aa).

Residues 1 to 41 lie on the Extracellular side of the membrane; it reads MRMEDEDYNTSISYGDEYPDYLDSIVVLEDLSPLEARVTRI. N-linked (GlcNAc...) asparagine glycosylation is present at Asn9. Residues 42–64 form a helical membrane-spanning segment; it reads FLVVVYSIVCFLGILGNGLVIII. Residues 65 to 75 are Cytoplasmic-facing; the sequence is ATFKMKKTVNM. The chain crosses the membrane as a helical span at residues 76–97; it reads VWFLNLAVADFLFNVFLPIHIT. The Extracellular portion of the chain corresponds to 98 to 114; it reads YAAMDYHWVFGTAMCKI. A disulfide bridge links Cys112 with Cys189. A helical transmembrane segment spans residues 115–135; it reads SNFLLIHNMFTSVFLLTIISS. Over 136 to 154 the chain is Cytoplasmic; sequence DRCISVLLPVWSQNHRSVR. A helical transmembrane segment spans residues 155-176; the sequence is LAYMACMVIWVLAFFLSSPSLV. The Extracellular portion of the chain corresponds to 177-224; the sequence is FRDTANLHGKISCFNNFSLSTPGSSSWPTHSQMDPVGYSRHMVVTVTR. An N-linked (GlcNAc...) asparagine glycan is attached at Asn192. A helical transmembrane segment spans residues 225 to 245; sequence FLCGFLVPVLIITACYLTIVC. Topologically, residues 246–261 are cytoplasmic; it reads KLQRNRLAKTKKPFKI. A helical membrane pass occupies residues 262–282; that stretch reads IVTIIITFFLCWCPYHTLNLL. Over 283 to 300 the chain is Extracellular; that stretch reads ELHHTAMPGSVFSLGLPL. Residues 301-320 traverse the membrane as a helical segment; it reads ATALAIANSCMNPILYVFMG. Over 321 to 373 the chain is Cytoplasmic; that stretch reads QDFKKFKVALFSRLVNALSEDTGHSSYPSHRSFTKMSSMNERTSMNERETGML. Ser339 is subject to Phosphoserine. The interval 341–373 is disordered; that stretch reads DTGHSSYPSHRSFTKMSSMNERTSMNERETGML. Thr342 is subject to Phosphothreonine. A compositionally biased stretch (polar residues) spans 344–363; the sequence is HSSYPSHRSFTKMSSMNERT. A phosphoserine mark is found at Ser349, Ser352, and Ser358. Residues 364 to 373 are compositionally biased toward basic and acidic residues; sequence SMNERETGML.

Belongs to the chemokine-like receptor (CMKLR) family. As to expression, prominently expressed in developing osseous and cartilaginous tissue. Also found in adult parathyroid glands. Expressed in cardiovascular system, brain, kidney, gastrointestinal tissues and myeloid tissues. Expressed in a broad array of tissues associated with hematopoietic and immune function including, spleen, thymus, appendix, lymph node, bone marrow and fetal liver. Among leukocyte populations abundant expression in monocyte-derived macrophage and immature dendritic cells (DCs). High expression in blood monocytes and low levels in polymorphonuclear cells and T-cells. Expressed on endothelial cells. Highly expressed in differentiating adipocytes.

The protein resides in the cell membrane. In terms of biological role, receptor for the chemoattractant adipokine chemerin/RARRES2 and for the omega-3 fatty acid derived molecule resolvin E1. Interaction with RARRES2 initiates activation of G proteins G(i)/G(o) and beta-arrestin pathways inducing cellular responses via second messenger pathways such as intracellular calcium mobilization, phosphorylation of MAP kinases MAPK1/MAPK3 (ERK1/2), TYRO3, MAPK14/P38MAPK and PI3K leading to multifunctional effects, like reduction of immune responses, enhancing of adipogenesis and angionesis. Resolvin E1 down-regulates cytokine production in macrophages by reducing the activation of MAPK1/3 (ERK1/2) and NF-kappa-B. Positively regulates adipogenesis and adipocyte metabolism. Its function is as follows. (Microbial infection) Acts as a coreceptor for several SIV strains (SIVMAC316, SIVMAC239, SIVMACL7E-FR and SIVSM62A), as well as a primary HIV-1 strain (92UG024-2). The polypeptide is Chemerin-like receptor 1 (Homo sapiens (Human)).